The chain runs to 154 residues: NADPH-dependent 7-cyano-7-deazaguanine reductase (154 aa).

The segment covering M1–G13 has biased composition (polar residues). The interval M1–V30 is disordered. The span at D17–L27 shows a compositional bias: basic and acidic residues. Residue C52 is the Thioimide intermediate of the active site. Catalysis depends on D59, which acts as the Proton donor. Residues V74–S76 and H93–E94 contribute to the substrate site.

It belongs to the GTP cyclohydrolase I family. QueF type 1 subfamily.

Its subcellular location is the cytoplasm. It carries out the reaction 7-aminomethyl-7-carbaguanine + 2 NADP(+) = 7-cyano-7-deazaguanine + 2 NADPH + 3 H(+). It participates in tRNA modification; tRNA-queuosine biosynthesis. Its function is as follows. Catalyzes the NADPH-dependent reduction of 7-cyano-7-deazaguanine (preQ0) to 7-aminomethyl-7-deazaguanine (preQ1). The chain is NADPH-dependent 7-cyano-7-deazaguanine reductase from Agrobacterium fabrum (strain C58 / ATCC 33970) (Agrobacterium tumefaciens (strain C58)).